The primary structure comprises 326 residues: Glycerol-3-phosphate dehydrogenase [NAD(P)+] (326 aa).

Residues Ser10, Phe11, Arg31, and Lys108 each coordinate NADPH. The sn-glycerol 3-phosphate site is built by Lys108, Gly136, and Ser138. Residue Ala140 participates in NADPH binding. Residues Lys191, Asp246, Ser256, Arg257, and Asn258 each contribute to the sn-glycerol 3-phosphate site. Lys191 (proton acceptor) is an active-site residue. An NADPH-binding site is contributed by Arg257. NADPH-binding residues include Ile281 and Glu283.

It belongs to the NAD-dependent glycerol-3-phosphate dehydrogenase family.

It is found in the cytoplasm. It carries out the reaction sn-glycerol 3-phosphate + NAD(+) = dihydroxyacetone phosphate + NADH + H(+). It catalyses the reaction sn-glycerol 3-phosphate + NADP(+) = dihydroxyacetone phosphate + NADPH + H(+). Its pathway is membrane lipid metabolism; glycerophospholipid metabolism. Functionally, catalyzes the reduction of the glycolytic intermediate dihydroxyacetone phosphate (DHAP) to sn-glycerol 3-phosphate (G3P), the key precursor for phospholipid synthesis. This chain is Glycerol-3-phosphate dehydrogenase [NAD(P)+], found in Ehrlichia chaffeensis (strain ATCC CRL-10679 / Arkansas).